A 369-amino-acid polypeptide reads, in one-letter code: DNA replication and repair protein RecF (369 aa).

Residue 30-37 (GENGQGKT) participates in ATP binding.

It belongs to the RecF family.

Its subcellular location is the cytoplasm. Functionally, the RecF protein is involved in DNA metabolism; it is required for DNA replication and normal SOS inducibility. RecF binds preferentially to single-stranded, linear DNA. It also seems to bind ATP. The polypeptide is DNA replication and repair protein RecF (Anaeromyxobacter sp. (strain Fw109-5)).